The following is a 507-amino-acid chain: MDFEYLPFNLVTFFIFLFFVFLLIYGRRKSKRTXKINLPPGPWKLPILGNLHNMMMGSSPHHIFRDLSRKYGDLMLIKLGEFNTIVASSPRMAKEVLKTHDLSFLNRPIIQATKILCYDNSALVFSQYGDSWRQMRKIFVLELLSTKRVRSFQPIRQDEGSRLVSLIKESVGKSIDLSEKIKLYTTSMVARAAFGKVNDAGVTFLKLVTEAAEVAEGFDPADMFPSYKFLNVFFNSRSNLLKIHGKTDMILEEMIDEHIKSHQMGKKANGENGEEDVIDILLSIKDSGDLGISHWMNNVKALIFDMFSAGTETSSATVEWAMTELMKNPSVMRKAQDEVRQAFKGKKTIDESDLEELKYLKLVVKEVLRLHPFAPLLVPRECREACQIDGYDIPVKTRVFVNVWAIGRDEKYWKDPESFIPERFEDNSLDFTGNNFEYLPFGCGRRICPGMTFGLANVHLVLALLLYHFNWKLPPGVNDIDMAERPGLGASKKHGLVLVPSFYQPSF.

A run of 2 helical transmembrane segments spans residues 6-26 (LPFNLVTFFIFLFFVFLLIYG) and 447-467 (ICPGMTFGLANVHLVLALLLY). Cys448 contacts heme.

This sequence belongs to the cytochrome P450 family.

Its subcellular location is the membrane. This Catharanthus roseus (Madagascar periwinkle) protein is Cytochrome P450 71D2.